The sequence spans 228 residues: Cytidylate kinase (228 aa).

Residue 12 to 20 (GPSGSGKGT) coordinates ATP.

This sequence belongs to the cytidylate kinase family. Type 1 subfamily.

The protein localises to the cytoplasm. The enzyme catalyses CMP + ATP = CDP + ADP. It catalyses the reaction dCMP + ATP = dCDP + ADP. In Pseudomonas entomophila (strain L48), this protein is Cytidylate kinase.